A 287-amino-acid chain; its full sequence is ATP synthase gamma chain (287 aa).

This sequence belongs to the ATPase gamma chain family. In terms of assembly, F-type ATPases have 2 components, CF(1) - the catalytic core - and CF(0) - the membrane proton channel. CF(1) has five subunits: alpha(3), beta(3), gamma(1), delta(1), epsilon(1). CF(0) has three main subunits: a, b and c.

The protein localises to the cell inner membrane. Its function is as follows. Produces ATP from ADP in the presence of a proton gradient across the membrane. The gamma chain is believed to be important in regulating ATPase activity and the flow of protons through the CF(0) complex. This is ATP synthase gamma chain from Hahella chejuensis (strain KCTC 2396).